Consider the following 173-residue polypeptide: Atrial gland and califin peptides (173 aa).

A signal peptide spans 1 to 21; the sequence is MKANTMFIILCLSLSTLCVSS. Positions 22–34 are excised as a propeptide; the sequence is QSTSVHGKIFVPN. An Isoleucine amide modification is found at Ile-69. Residues 73 to 114 constitute a propeptide that is removed on maturation; that stretch reads AAGEMEQSEGQNPETKSHSWRKRSVLTPSLSSLGESLESGIS. The interval 75 to 94 is disordered; sequence GEMEQSEGQNPETKSHSWRK. Cys-141 and Cys-172 are oxidised to a cystine. Residue Leu-152 is modified to Leucine amide.

It belongs to the molluscan ELH family. As to quaternary structure, califin A consists of a 36-residue large subunit bound by a single disulfide bond to a 18-residue small subunit.

The protein resides in the secreted. Its function is as follows. The atrial gland peptide A and peptide B precursors are the source of the 2 peptides that, upon release from this reproductive system gland, initiate the egg-laying process by exciting the bag cell neurons. These neurons, clustered in neural connectives near the abdominal ganglion, in turn release other peptides that act directly on the ganglion and also, via the circulating hemolymph, on many other organs to control the physiological processes of egg-laying. One of these other peptides is the egg-laying hormone. Functionally, injected in sexually mature animals califin A excites LB and LC cells of the abdominal ganglion and causes egg-laying. In Aplysia californica (California sea hare), this protein is Atrial gland and califin peptides.